Consider the following 645-residue polypeptide: Translation factor GUF1, mitochondrial (645 aa).

The tr-type G domain maps to 44-228 (ENYRNFSIVA…AIIDRIPPPT (185 aa)). GTP contacts are provided by residues 53 to 60 (AHVDHGKS), 120 to 124 (DTPGH), and 174 to 177 (NKID).

Belongs to the TRAFAC class translation factor GTPase superfamily. Classic translation factor GTPase family. LepA subfamily.

It localises to the mitochondrion inner membrane. It carries out the reaction GTP + H2O = GDP + phosphate + H(+). Functionally, promotes mitochondrial protein synthesis. May act as a fidelity factor of the translation reaction, by catalyzing a one-codon backward translocation of tRNAs on improperly translocated ribosomes. Binds to mitochondrial ribosomes in a GTP-dependent manner. This Saccharomyces cerevisiae (strain ATCC 204508 / S288c) (Baker's yeast) protein is Translation factor GUF1, mitochondrial.